The chain runs to 524 residues: Metalloendopeptidase OMA1, mitochondrial (524 aa).

Residues 1–13 constitute a mitochondrion transit peptide; sequence MSFICGLQSAARN. A propeptide spanning residues 14–143 is cleaved from the precursor; it reads HVFFRFNSLS…RNFHTSPRFQ (130 aa). At 144–195 the chain is on the mitochondrial matrix side; that stretch reads AAPVPLLLMILKPVQKLFAIIVGRGIRKWWQALPPNKKEVVKENIRKNKWKL. A cardiolipin-binding region spans residues 148 to 167; sequence PLLLMILKPVQKLFAIIVGR. The interval 165–195 is stress-sensor region; the sequence is VGRGIRKWWQALPPNKKEVVKENIRKNKWKL. Residues 196 to 216 traverse the membrane as a helical segment; the sequence is FLGLSSFGLLFVVFYFTHLEV. Position 327 (histidine 327) interacts with Zn(2+). Glutamate 328 is an active-site residue. Zn(2+) contacts are provided by histidine 331 and glutamate 392. An intrachain disulfide couples cysteine 407 to cysteine 465.

The protein belongs to the peptidase M48 family. Homooligomer. It depends on Zn(2+) as a cofactor. In terms of processing, may form a redox-dependent disulfide bond. Exists in a semi-oxidized state and is activated by prolonged hypoxia. Post-translationally, autocatalytically cleaved in response to mitochondrial depolarization both at the N-terminus and C-terminus to generate the short active form (S-OMA1). Autocatalytic processing at the C-terminus takes place at residues 447-456. The S-OMA1 form is unstable. OMA1 pre-processing by AFG3L2 may participate in maturation before OMA1 autocatalytic cleavage. Degraded by YMEL1 in response to membrane depolarization. Protein turnover is regulated by prohibitin (PHB and PHB2), which promotes degradation of OMA1 in a cardiolipin-binding manner. In terms of tissue distribution, widely expressed, with strong expression in the heart, skeletal muscle, kidney and liver.

Its subcellular location is the mitochondrion inner membrane. Protease activity is activated upon autocatalytic cleavage in response to mitochondrial depolarization. Its function is as follows. Metalloprotease that is part of the quality control system in the inner membrane of mitochondria. Activated in response to various mitochondrial stress, leading to the proteolytic cleavage of target proteins, such as OPA1, UQCC3 and DELE1. Involved in the fusion of the mitochondrial inner membranes by mediating cleavage of OPA1 at S1 position, generating the soluble OPA1 (S-OPA1), which cooperates with the membrane form (L-OPA1) to coordinate the fusion of mitochondrial inner membranes. Following stress conditions that induce loss of mitochondrial membrane potential, mediates cleavage of OPA1, leading to excess production of soluble OPA1 (S-OPA1) and negative regulation of mitochondrial fusion. Involved in mitochondrial safeguard in response to transient mitochondrial membrane depolarization (flickering) by catalyzing cleavage of OPA1, leading to excess production of S-OPA1, preventing mitochondrial hyperfusion. Also acts as a regulator of apoptosis: upon BAK and BAX aggregation, mediates cleavage of OPA1, leading to the remodeling of mitochondrial cristae and allowing the release of cytochrome c from mitochondrial cristae. In depolarized mitochondria, may also act as a backup protease for PINK1 by mediating PINK1 cleavage and promoting its subsequent degradation by the proteasome. May also cleave UQCC3 in response to mitochondrial depolarization. Also acts as an activator of the integrated stress response (ISR): in response to mitochondrial stress, mediates cleavage of DELE1 to generate the processed form of DELE1 (S-DELE1), which translocates to the cytosol and activates EIF2AK1/HRI to trigger the ISR. Its role in mitochondrial quality control is essential for regulating lipid metabolism as well as to maintain body temperature and energy expenditure under cold-stress conditions. Binds cardiolipin, possibly regulating its protein turnover. Required for the stability of the respiratory supercomplexes. The chain is Metalloendopeptidase OMA1, mitochondrial from Homo sapiens (Human).